Consider the following 75-residue polypeptide: M-myrmeciitoxin-Mp2a (75 aa).

The signal sequence occupies residues 1–26 (MKLSCLLLTLAIIFVLTIVHAPNVEA). A propeptide spanning residues 27–48 (KALADPESDAVGFADAVGEADP) is cleaved from the precursor. A Leucine amide modification is found at leucine 74.

Belongs to the formicidae venom precursor-01 superfamily. Ant pilosulin family. As to quaternary structure, heterodimer with M-MIITX-Mp2b (pilosin-3b) (AC P0C023); disulfide-linked. Only heterodimers (and not monomers) have been identified in the venom. In terms of tissue distribution, expressed by the venom gland.

It localises to the secreted. Its function is as follows. Heterodimer protein that may serve both defensive (pain-inducing) and predatory (insecticidal) roles. Has membrane-disrupting activity and shows induction of non-specific calcium influx into cells,. Shows broad-spectrum activity against a diverse range of bacteria, and cell lines, as well as hemolytic activity (EC(50)=2.18 uM). In vivo, shows moderate insecticidal activity against D.melanogaster and potent anthelmintic activity against the veterinary nematode H.contortus. In addition, intraplantar injection into mice induces nocifensive behavior and mechanical allodynia. The protein is M-myrmeciitoxin-Mp2a of Myrmecia pilosula (Jack jumper ant).